The following is a 303-amino-acid chain: Cilia- and flagella-associated protein 161 (303 aa).

Microtubule inner protein component of sperm flagellar doublet microtubules.

The protein resides in the cytoplasm. Its subcellular location is the cytoskeleton. It is found in the cilium axoneme. The protein localises to the flagellum axoneme. In terms of biological role, microtubule inner protein (MIP) part of the dynein-decorated doublet microtubules (DMTs) in cilia axoneme, which is required for motile cilia beating. The chain is Cilia- and flagella-associated protein 161 from Mus musculus (Mouse).